A 208-amino-acid polypeptide reads, in one-letter code: uncharacterized protein (208 aa).

The disordered stretch occupies residues 124 to 208; that stretch reads KKTGSSNART…PSFGKYSSLA (85 aa). A compositionally biased stretch (basic and acidic residues) spans 133-170; that stretch reads TPDEGKKAKNAPEEEKVKTSGSEDAKGEESAVEGKEPE.

Its subcellular location is the golgi apparatus. This is an uncharacterized protein from Encephalitozoon cuniculi (strain GB-M1) (Microsporidian parasite).